The sequence spans 114 residues: Transmembrane protein 14C (114 aa).

Transmembrane regions (helical) follow at residues 8 to 28 (LMPL…GGII), 33 to 53 (AGSV…GLGA), 63 to 83 (VWVF…RFYN), and 89 to 109 (PAGL…ISLL).

The protein belongs to the TMEM14 family.

The protein localises to the mitochondrion membrane. Required for normal heme biosynthesis. In Mus musculus (Mouse), this protein is Transmembrane protein 14C (Tmem14c).